Reading from the N-terminus, the 144-residue chain is Transcription antitermination protein NusB (144 aa).

The protein belongs to the NusB family.

Functionally, involved in transcription antitermination. Required for transcription of ribosomal RNA (rRNA) genes. Binds specifically to the boxA antiterminator sequence of the ribosomal RNA (rrn) operons. The protein is Transcription antitermination protein NusB of Blochmanniella pennsylvanica (strain BPEN).